Reading from the N-terminus, the 459-residue chain is Ribosomal protein uS12 methylthiotransferase RimO (459 aa).

In terms of domain architecture, MTTase N-terminal spans 11-126; it reads PKVGMVSLGC…VMQAVHSHLP (116 aa). [4Fe-4S] cluster is bound by residues C20, C56, C85, C157, C161, and C164. The Radical SAM core domain maps to 143-388; the sequence is LTPRHYAYLK…MEVAEEVSAA (246 aa). A TRAM domain is found at 391 to 459; sequence ARKVGKTLKV…ADGHDLWGEV (69 aa).

The protein belongs to the methylthiotransferase family. RimO subfamily. [4Fe-4S] cluster serves as cofactor.

It is found in the cytoplasm. The enzyme catalyses L-aspartate(89)-[ribosomal protein uS12]-hydrogen + (sulfur carrier)-SH + AH2 + 2 S-adenosyl-L-methionine = 3-methylsulfanyl-L-aspartate(89)-[ribosomal protein uS12]-hydrogen + (sulfur carrier)-H + 5'-deoxyadenosine + L-methionine + A + S-adenosyl-L-homocysteine + 2 H(+). Its function is as follows. Catalyzes the methylthiolation of an aspartic acid residue of ribosomal protein uS12. This is Ribosomal protein uS12 methylthiotransferase RimO from Burkholderia pseudomallei (strain K96243).